Consider the following 128-residue polypeptide: Small ribosomal subunit protein uS13 (128 aa).

The disordered stretch occupies residues 85–128; sequence GSYRGLRHRRSLPVRGQRTHTNARTRKGPRRGTVANKKKATGKT. Over residues 89–128 the composition is skewed to basic residues; the sequence is GLRHRRSLPVRGQRTHTNARTRKGPRRGTVANKKKATGKT.

This sequence belongs to the universal ribosomal protein uS13 family. Part of the 30S ribosomal subunit. Forms a loose heterodimer with protein S19. Forms two bridges to the 50S subunit in the 70S ribosome.

Functionally, located at the top of the head of the 30S subunit, it contacts several helices of the 16S rRNA. In the 70S ribosome it contacts the 23S rRNA (bridge B1a) and protein L5 of the 50S subunit (bridge B1b), connecting the 2 subunits; these bridges are implicated in subunit movement. Contacts the tRNAs in the A and P-sites. The chain is Small ribosomal subunit protein uS13 from Solibacter usitatus (strain Ellin6076).